Consider the following 150-residue polypeptide: Large ribosomal subunit protein uL15 (150 aa).

The segment at 1-57 (MSLTLQSLKPQKGARRRKMRKGRGIAAGQGASCGFGMRGQKSRSGRPTRPGFEGGQM) is disordered. The segment covering 12–23 (KGARRRKMRKGR) has biased composition (basic residues). Residues 25–37 (IAAGQGASCGFGM) are compositionally biased toward gly residues.

The protein belongs to the universal ribosomal protein uL15 family. In terms of assembly, part of the 50S ribosomal subunit.

In terms of biological role, binds to the 23S rRNA. This Synechococcus sp. (strain RCC307) protein is Large ribosomal subunit protein uL15.